Here is a 159-residue protein sequence, read N- to C-terminus: uncharacterized protein (159 aa).

Positions 1-13 are enriched in polar residues; that stretch reads MTQPTRPSVTCDQ. The segment at 1 to 57 is disordered; that stretch reads MTQPTRPSVTCDQGSSTIGGTAAQATTSSSATSGSNYQRDRLGRRPEIGVGGQPQIC. The span at 14 to 35 shows a compositional bias: low complexity; it reads GSSTIGGTAAQATTSSSATSGS. The segment covering 38 to 47 has biased composition (basic and acidic residues); the sequence is QRDRLGRRPE.

This is an uncharacterized protein from Homo sapiens (Human).